The sequence spans 490 residues: Cytochrome P450 2C9 (490 aa).

Cysteine 435 contributes to the heme binding site.

It belongs to the cytochrome P450 family. Heme is required as a cofactor.

Its subcellular location is the endoplasmic reticulum membrane. The protein resides in the microsome membrane. The enzyme catalyses an organic molecule + reduced [NADPH--hemoprotein reductase] + O2 = an alcohol + oxidized [NADPH--hemoprotein reductase] + H2O + H(+). The catalysed reaction is (5Z,8Z,11Z,14Z)-eicosatetraenoate + reduced [NADPH--hemoprotein reductase] + O2 = (8R,9S)-epoxy-(5Z,11Z,14Z)-eicosatrienoate + oxidized [NADPH--hemoprotein reductase] + H2O + H(+). It carries out the reaction (5Z,8Z,11Z,14Z)-eicosatetraenoate + reduced [NADPH--hemoprotein reductase] + O2 = (8S,9R)-epoxy-(5Z,11Z,14Z)-eicosatrienoate + oxidized [NADPH--hemoprotein reductase] + H2O + H(+). It catalyses the reaction (5Z,8Z,11Z,14Z)-eicosatetraenoate + reduced [NADPH--hemoprotein reductase] + O2 = (11R,12S)-epoxy-(5Z,8Z,14Z)-eicosatrienoate + oxidized [NADPH--hemoprotein reductase] + H2O + H(+). The enzyme catalyses (5Z,8Z,11Z,14Z)-eicosatetraenoate + reduced [NADPH--hemoprotein reductase] + O2 = (11S,12R)-epoxy-(5Z,8Z,14Z)-eicosatrienoate + oxidized [NADPH--hemoprotein reductase] + H2O + H(+). The catalysed reaction is (5Z,8Z,11Z,14Z)-eicosatetraenoate + reduced [NADPH--hemoprotein reductase] + O2 = (14R,15S)-epoxy-(5Z,8Z,11Z)-eicosatrienoate + oxidized [NADPH--hemoprotein reductase] + H2O + H(+). It carries out the reaction (5Z,8Z,11Z,14Z)-eicosatetraenoate + reduced [NADPH--hemoprotein reductase] + O2 = (14S,15R)-epoxy-(5Z,8Z,11Z)-eicosatrienoate + oxidized [NADPH--hemoprotein reductase] + H2O + H(+). It catalyses the reaction (5Z,8Z,11Z,14Z,17Z)-eicosapentaenoate + reduced [NADPH--hemoprotein reductase] + O2 = 8,9-epoxy-(5Z,11Z,14Z,17Z)-eicosatetraenoate + oxidized [NADPH--hemoprotein reductase] + H2O + H(+). The enzyme catalyses (5Z,8Z,11Z,14Z,17Z)-eicosapentaenoate + reduced [NADPH--hemoprotein reductase] + O2 = 11,12-epoxy-(5Z,8Z,14Z,17Z)-eicosatetraenoate + oxidized [NADPH--hemoprotein reductase] + H2O + H(+). The catalysed reaction is (5Z,8Z,11Z,14Z,17Z)-eicosapentaenoate + reduced [NADPH--hemoprotein reductase] + O2 = 14,15-epoxy-(5Z,8Z,11Z,17Z)-eicosatetraenoate + oxidized [NADPH--hemoprotein reductase] + H2O + H(+). It carries out the reaction (5Z,8Z,11Z,14Z,17Z)-eicosapentaenoate + reduced [NADPH--hemoprotein reductase] + O2 = (17R,18S)-epoxy-(5Z,8Z,11Z,14Z)-eicosatetraenoate + oxidized [NADPH--hemoprotein reductase] + H2O + H(+). It catalyses the reaction cholesterol + reduced [NADPH--hemoprotein reductase] + O2 = 25-hydroxycholesterol + oxidized [NADPH--hemoprotein reductase] + H2O + H(+). The enzyme catalyses 17beta-estradiol + reduced [NADPH--hemoprotein reductase] + O2 = 2-hydroxy-17beta-estradiol + oxidized [NADPH--hemoprotein reductase] + H2O + H(+). The catalysed reaction is estrone + reduced [NADPH--hemoprotein reductase] + O2 = 2-hydroxyestrone + oxidized [NADPH--hemoprotein reductase] + H2O + H(+). It carries out the reaction (5Z,8Z,11Z,14Z)-eicosatetraenoate + reduced [NADPH--hemoprotein reductase] + O2 = (11R)-hydroxy-(5Z,8Z,12E,14Z)-eicosatetraenoate + oxidized [NADPH--hemoprotein reductase] + H2O + H(+). It catalyses the reaction (5Z,8Z,11Z,14Z)-eicosatetraenoate + reduced [NADPH--hemoprotein reductase] + O2 = (12R)-hydroxy-(5Z,8Z,10E,14Z)-eicosatetraenoate + oxidized [NADPH--hemoprotein reductase] + H2O + H(+). The enzyme catalyses (5Z,8Z,11Z,14Z)-eicosatetraenoate + reduced [NADPH--hemoprotein reductase] + O2 = (15R)-hydroxy-(5Z,8Z,11Z,13E)-eicosatetraenoate + oxidized [NADPH--hemoprotein reductase] + H2O + H(+). The catalysed reaction is (5Z,8Z,11Z,14Z)-eicosatetraenoate + reduced [NADPH--hemoprotein reductase] + O2 = 10-hydroxy-(5Z,8Z,11Z,14Z)-eicosatetraenoate + oxidized [NADPH--hemoprotein reductase] + H2O + H(+). It carries out the reaction (9Z,12Z)-octadecadienoate + reduced [NADPH--hemoprotein reductase] + O2 = (13R)-hydroxy-(9Z,11E)-octadecadienoate + oxidized [NADPH--hemoprotein reductase] + H2O + H(+). It catalyses the reaction (9Z,12Z)-octadecadienoate + reduced [NADPH--hemoprotein reductase] + O2 = (9R)-hydroxy-(10E,12Z)-octadecadienoate + oxidized [NADPH--hemoprotein reductase] + H2O + H(+). The enzyme catalyses (5Z,8Z,11Z,14Z)-eicosatetraenoate + reduced [NADPH--hemoprotein reductase] + O2 = 19-hydroxy-(5Z,8Z,11Z,14Z)-eicosatetraenoate + oxidized [NADPH--hemoprotein reductase] + H2O + H(+). The catalysed reaction is (5Z,8Z,11Z,14Z)-eicosatetraenoate + reduced [NADPH--hemoprotein reductase] + O2 = 13(S)-hydroxy-(5Z,8Z,11Z,14Z)-eicosatetraenoate + oxidized [NADPH--hemoprotein reductase] + H2O + H(+). It carries out the reaction (5Z,8Z,11Z,14Z)-eicosatetraenoate + reduced [NADPH--hemoprotein reductase] + O2 = 14,15-epoxy-(5Z,8Z,11Z)-eicosatrienoate + oxidized [NADPH--hemoprotein reductase] + H2O + H(+). It catalyses the reaction (5Z,8Z,11Z,14Z)-eicosatetraenoate + reduced [NADPH--hemoprotein reductase] + O2 = 11,12-epoxy-(5Z,8Z,14Z)-eicosatrienoate + oxidized [NADPH--hemoprotein reductase] + H2O + H(+). The enzyme catalyses (5Z,8Z,11Z,14Z)-eicosatetraenoate + reduced [NADPH--hemoprotein reductase] + O2 = 13-hydroxy-(5Z,8Z,11Z,14Z)-eicosatetraenoate + oxidized [NADPH--hemoprotein reductase] + H2O + H(+). The catalysed reaction is (4R)-limonene + reduced [NADPH--hemoprotein reductase] + O2 = (1R,5S)-carveol + oxidized [NADPH--hemoprotein reductase] + H2O + H(+). It carries out the reaction (4S)-limonene + reduced [NADPH--hemoprotein reductase] + O2 = (1S,5R)-carveol + oxidized [NADPH--hemoprotein reductase] + H2O + H(+). It catalyses the reaction (4S)-limonene + reduced [NADPH--hemoprotein reductase] + O2 = (4S)-perillyl alcohol + oxidized [NADPH--hemoprotein reductase] + H2O + H(+). It functions in the pathway lipid metabolism; arachidonate metabolism. It participates in steroid metabolism; cholesterol metabolism. Its pathway is terpene metabolism; (4R)-limonene degradation. Functionally, a cytochrome P450 monooxygenase involved in the metabolism of various endogenous substrates, including fatty acids and steroids. Mechanistically, uses molecular oxygen inserting one oxygen atom into a substrate, and reducing the second into a water molecule, with two electrons provided by NADPH via cytochrome P450 reductase (NADPH--hemoprotein reductase). Catalyzes the epoxidation of double bonds of polyunsaturated fatty acids (PUFA). Catalyzes the hydroxylation of carbon-hydrogen bonds. Metabolizes cholesterol toward 25-hydroxycholesterol, a physiological regulator of cellular cholesterol homeostasis. Exhibits low catalytic activity for the formation of catechol estrogens from 17beta-estradiol (E2) and estrone (E1), namely 2-hydroxy E1 and E2. Catalyzes bisallylic hydroxylation and hydroxylation with double-bond migration of polyunsaturated fatty acids (PUFA). Also metabolizes plant monoterpenes such as limonene. Oxygenates (R)- and (S)-limonene to produce carveol and perillyl alcohol. Contributes to the wide pharmacokinetics variability of the metabolism of drugs such as S-warfarin, diclofenac, phenytoin, tolbutamide and losartan. This Homo sapiens (Human) protein is Cytochrome P450 2C9.